A 616-amino-acid polypeptide reads, in one-letter code: Zinc metalloproteinase-disintegrin-like ecarin (616 aa).

Residues 1–20 (MIQILLVIICLAVFPYQGCS) form the signal peptide. The propeptide occupies 21–190 (IILGSGNVND…EPIKKTLGLI (170 aa)). A Peptidase M12B domain is found at 201-397 (KFIELVVVVD…YNPKCILDPP (197 aa)). Ca(2+) is bound at residue Glu204. N-linked (GlcNAc...) asparagine glycosylation is found at Asn219 and Asn261. Asp288 is a binding site for Ca(2+). N-linked (GlcNAc...) asparagine glycans are attached at residues Asn295 and Asn326. 3 disulfides stabilise this stretch: Cys312/Cys392, Cys352/Cys376, and Cys354/Cys359. His337 lines the Zn(2+) pocket. Glu338 is a catalytic residue. Zn(2+) is bound by residues His341 and His347. The Ca(2+) site is built by Cys392, Val407, Asn410, Ile412, Glu414, Glu417, and Asp420. The Disintegrin domain occupies 405–491 (PAVCGNEIWE…ECPRNEFQRN (87 aa)). 14 cysteine pairs are disulfide-bonded: Cys408–Cys437, Cys419–Cys432, Cys421–Cys427, Cys431–Cys454, Cys445–Cys451, Cys450–Cys476, Cys463–Cys483, Cys470–Cys502, Cys495–Cys507, Cys514–Cys567, Cys529–Cys578, Cys542–Cys555, Cys562–Cys604, and Cys598–Cys609. A D/ECD-tripeptide motif is present at residues 469–471 (DCD). Asp471, Val472, and Asn486 together coordinate Ca(2+). Asn497 carries an N-linked (GlcNAc...) asparagine glycan.

It belongs to the venom metalloproteinase (M12B) family. P-III subfamily. P-IIIa sub-subfamily. In terms of assembly, monomer. Requires Zn(2+) as cofactor. Expressed by the venom gland.

It is found in the secreted. Functionally, snake venom zinc metalloproteinase that catalyzes the conversion of prothrombin (F2) to alpha-thrombin through formation of a thrombin intermediate, thereby functioning as a procoagulant protein. Has a low Km for prothrombin and a high kcat. Cleaves the 320-Arg-Ile-321 bond in prothrombin and produces meizothrombin which is ultimately converted to alpha-thrombin by autolysis. The sequence is that of Zinc metalloproteinase-disintegrin-like ecarin from Echis carinatus (Saw-scaled viper).